The chain runs to 931 residues: Phosphoenolpyruvate carboxylase (931 aa).

Catalysis depends on residues H158 and K593.

It belongs to the PEPCase type 1 family. Requires Mg(2+) as cofactor.

It carries out the reaction oxaloacetate + phosphate = phosphoenolpyruvate + hydrogencarbonate. In terms of biological role, forms oxaloacetate, a four-carbon dicarboxylic acid source for the tricarboxylic acid cycle. The sequence is that of Phosphoenolpyruvate carboxylase from Azorhizobium caulinodans (strain ATCC 43989 / DSM 5975 / JCM 20966 / LMG 6465 / NBRC 14845 / NCIMB 13405 / ORS 571).